The chain runs to 363 residues: MRTVGVEEELLLVDPATGEPRALSAAVLARAFLDDSEQDVFEKELHEQMLEFATHPQADMERLHAEIVRCREEAGRHAGGIGCAVAALATSPLPVTPSIGVNRRYEWMAEQYGVVVHEQLVLGCHVHVSVDSDEEGVAVIDRVRPWLPVLAALSANSPFWQGRDSSYSSYRSRVWQRWPSAGPTELFGSAERYHRRVADMLATGTVLDDGMVYFDVRLSQRYPTVEFRVADVCLDASTAVVLAALARALVDTAAREWRAGAEPAEHSVSLLRLAAWRAARSGLTSELLHPATMRRMPAESVVRDLLEHAGEALAAAGDLERVREGVEKLLRHGNGARVQRELLARTGSLREVVAACVRRTQAA.

This sequence belongs to the glutamate--cysteine ligase type 2 family. YbdK subfamily.

It carries out the reaction L-cysteine + L-glutamate + ATP = gamma-L-glutamyl-L-cysteine + ADP + phosphate + H(+). ATP-dependent carboxylate-amine ligase which exhibits weak glutamate--cysteine ligase activity. The chain is Putative glutamate--cysteine ligase 2 from Streptomyces coelicolor (strain ATCC BAA-471 / A3(2) / M145).